The primary structure comprises 24 residues: Chaperonin GroEL (24 aa).

The protein belongs to the chaperonin (HSP60) family. In terms of assembly, forms a cylinder of 14 subunits composed of two heptameric rings stacked back-to-back. Interacts with the co-chaperonin GroES.

The protein resides in the cytoplasm. The enzyme catalyses ATP + H2O + a folded polypeptide = ADP + phosphate + an unfolded polypeptide.. Together with its co-chaperonin GroES, plays an essential role in assisting protein folding. The GroEL-GroES system forms a nano-cage that allows encapsulation of the non-native substrate proteins and provides a physical environment optimized to promote and accelerate protein folding. The polypeptide is Chaperonin GroEL (Acinetobacter calcoaceticus).